A 504-amino-acid chain; its full sequence is Anaerobic nitric oxide reductase transcription regulator NorR (504 aa).

The residue at position 57 (aspartate 57) is a 4-aspartylphosphate. In terms of domain architecture, Sigma-54 factor interaction spans 187-416; that stretch reads MIGLSPGMMQ…LEHAIHRAVV (230 aa). ATP-binding positions include 215 to 222 and 278 to 287; these read GETGTGKE and ADNGTLFLDE. Residues 479-498 constitute a DNA-binding region (H-T-H motif); that stretch reads WAACARALEMDVANLHRLAK.

It functions in the pathway nitrogen metabolism; nitric oxide reduction. Required for the expression of anaerobic nitric oxide (NO) reductase, acts as a transcriptional activator for at least the norVW operon. Activation also requires sigma-54. The protein is Anaerobic nitric oxide reductase transcription regulator NorR of Enterobacter sp. (strain 638).